The primary structure comprises 314 residues: Formylglycine-generating enzyme (314 aa).

Residues 1 to 20 (MAVAAPSPAAAAEPGPAARP) are compositionally biased toward low complexity. Positions 1-31 (MAVAAPSPAAAAEPGPAARPRSTRGQVRLPG) are disordered. Residues Asn194, Ile195, Asp208, and His210 each contribute to the Ca(2+) site. Residues Cys272 and Cys277 each contribute to the Cu(2+) site.

The protein belongs to the sulfatase-modifying factor family. The cofactor is Cu(2+).

The enzyme catalyses L-cysteinyl-[sulfatase] + 2 a thiol + O2 = an organic disulfide + 3-oxo-L-alanyl-[sulfatase] + hydrogen sulfide + H2O + H(+). It functions in the pathway protein modification; sulfatase oxidation. In terms of biological role, oxidase that catalyzes the conversion of cysteine to 3-oxoalanine on target proteins. 3-oxoalanine modification, which is also named formylglycine (fGly), occurs in the maturation of arylsulfatases and some alkaline phosphatases that use the hydrated form of 3-oxoalanine as a catalytic nucleophile. In Streptomyces coelicolor (strain ATCC BAA-471 / A3(2) / M145), this protein is Formylglycine-generating enzyme.